The following is a 472-amino-acid chain: Methanethiol oxidase (472 aa).

The residue at position 2 (Ala-2) is an N-acetylalanine. A phosphoserine mark is found at Ser-111, Ser-371, and Ser-467.

Belongs to the selenium-binding protein family. In terms of assembly, interacts with USP33. In terms of processing, phosphorylated. The N-terminus is blocked. Widely expressed. Highly expressed in liver, lung, colon, prostate, kidney and pancreas. In brain, present both in neurons and glia (at protein level). Down-regulated in lung adenocarcinoma, colorectal carcinoma and ovarian cancer. Two-fold up-regulated in brain and blood from schizophrenia patients.

It is found in the nucleus. It localises to the cytoplasm. Its subcellular location is the cytosol. The protein localises to the membrane. It carries out the reaction methanethiol + O2 + H2O = hydrogen sulfide + formaldehyde + H2O2 + H(+). The protein operates within organosulfur degradation. In terms of biological role, catalyzes the oxidation of methanethiol, an organosulfur compound known to be produced in substantial amounts by gut bacteria. Selenium-binding protein which may be involved in the sensing of reactive xenobiotics in the cytoplasm. May be involved in intra-Golgi protein transport. This is Methanethiol oxidase (SELENBP1) from Homo sapiens (Human).